The primary structure comprises 268 residues: L-aspartate dehydrogenase (268 aa).

NAD(+) is bound by residues alanine 125 and asparagine 191. Histidine 221 is an active-site residue.

This sequence belongs to the L-aspartate dehydrogenase family.

The catalysed reaction is L-aspartate + NADP(+) + H2O = oxaloacetate + NH4(+) + NADPH + H(+). It catalyses the reaction L-aspartate + NAD(+) + H2O = oxaloacetate + NH4(+) + NADH + H(+). It participates in cofactor biosynthesis; NAD(+) biosynthesis; iminoaspartate from L-aspartate (dehydrogenase route): step 1/1. In terms of biological role, specifically catalyzes the NAD or NADP-dependent dehydrogenation of L-aspartate to iminoaspartate. This is L-aspartate dehydrogenase from Ralstonia nicotianae (strain ATCC BAA-1114 / GMI1000) (Ralstonia solanacearum).